A 318-amino-acid polypeptide reads, in one-letter code: Protease HtpX homolog (318 aa).

Helical transmembrane passes span 6–26 (TAML…LIGG) and 28–48 (GGMM…YWNS). Position 130 (H130) interacts with Zn(2+). The active site involves E131. H134 contributes to the Zn(2+) binding site. 2 helical membrane passes run 145 to 165 (ITAT…FFGG) and 173 to 193 (PLGF…AMLV). E202 contributes to the Zn(2+) binding site. The disordered stretch occupies residues 284–318 (NVSTGPVRAVNPTRKSRSVPNTGRGGSQPPRGPWS).

This sequence belongs to the peptidase M48B family. Zn(2+) serves as cofactor.

It is found in the cell inner membrane. The polypeptide is Protease HtpX homolog (Rhizobium etli (strain ATCC 51251 / DSM 11541 / JCM 21823 / NBRC 15573 / CFN 42)).